The chain runs to 92 residues: Acylphosphatase (92 aa).

The region spanning Arg-6–Tyr-92 is the Acylphosphatase-like domain. Active-site residues include Arg-21 and Asn-39.

The protein belongs to the acylphosphatase family.

It carries out the reaction an acyl phosphate + H2O = a carboxylate + phosphate + H(+). In Sulfolobus acidocaldarius (strain ATCC 33909 / DSM 639 / JCM 8929 / NBRC 15157 / NCIMB 11770), this protein is Acylphosphatase (acyP).